The following is a 622-amino-acid chain: Golgin subfamily A member 6-like protein 7 (622 aa).

3 disordered regions span residues 1–82 (MMSE…QQAL), 251–496 (RKHE…RKQV), and 511–580 (EKMQ…HDNR). Composition is skewed to basic and acidic residues over residues 57 to 74 (SPED…ENKA), 251 to 275 (RKHE…REQE), 283 to 332 (EQMR…KQEE), 339 to 367 (EQMR…KQEE), 374 to 388 (EQMR…KQEE), and 395 to 420 (EQMR…KQEE). Residues 100 to 534 (KTELETALHD…EKRREKKERM (435 aa)) adopt a coiled-coil conformation. The span at 477-489 (QMGEQEEQMGEQE) shows a compositional bias: acidic residues. 2 stretches are compositionally biased toward basic and acidic residues: residues 511–546 (EKMQ…ERCS) and 567–580 (PARE…HDNR).

This sequence belongs to the GOLGA6 family.

The sequence is that of Golgin subfamily A member 6-like protein 7 from Homo sapiens (Human).